The chain runs to 156 residues: Calglandulin (156 aa).

EF-hand domains are found at residues 8–43 (EQITEYKGIFEMFDEEGNGLVKTDDLESLMSLIGIN), 44–79 (PTKRDLANMAKDVDKDKKGTFNCEGFLVLMGIYHEK), 82–117 (NQDEELRAAFKVFDKEHKGYIEWDTLKYVLMNAGEP), and 118–153 (LNEHEAELMMKEADKDGDGTIDYEEFVAMMTGESFK). Residues Asp-131, Asp-133, Asp-135, Thr-137, and Glu-142 each contribute to the Ca(2+) site.

The protein belongs to the calmodulin family. Calglandulin subfamily. Expressed by the venom gland.

Its subcellular location is the cytoplasm. In terms of biological role, may be involved in the cellular control mechanism of the secretion of toxins from the gland into the venom. This Tropidechis carinatus (Australian rough-scaled snake) protein is Calglandulin.